We begin with the raw amino-acid sequence, 420 residues long: Fasciclin-like arabinogalactan protein 4 (420 aa).

A signal peptide spans 1–28; that stretch reads MANVISISHFTLLALPYLLLLLSSTAAA. FAS1 domains follow at residues 29–177 and 205–351; these read INVT…DSLI and GINL…SKVL. N30, N40, N135, N154, N167, N207, N312, and N317 each carry an N-linked (GlcNAc...) asparagine glycan. Positions 360–388 are disordered; sequence SGQPVATAPPQEISLSPESSSEQPSRLVS. A compositionally biased stretch (low complexity) spans 368 to 384; that stretch reads PPQEISLSPESSSEQPS. S396 carries GPI-anchor amidated serine lipidation. Residues 397 to 420 constitute a propeptide, removed in mature form; the sequence is GAVKRPLGFLVLWCWCIAFCYVLV.

The protein belongs to the fasciclin-like AGP family. Expressed in all plant organs and tissues, including guard cells in the leaf.

Its subcellular location is the cell membrane. May be a cell surface adhesion protein that is required for normal cell expansion. The chain is Fasciclin-like arabinogalactan protein 4 (FLA4) from Arabidopsis thaliana (Mouse-ear cress).